Here is a 180-residue protein sequence, read N- to C-terminus: Large ribosomal subunit protein uL5 (180 aa).

Belongs to the universal ribosomal protein uL5 family. As to quaternary structure, part of the 50S ribosomal subunit; part of the 5S rRNA/L5/L18/L25 subcomplex. Contacts the 5S rRNA and the P site tRNA. Forms a bridge to the 30S subunit in the 70S ribosome.

In terms of biological role, this is one of the proteins that bind and probably mediate the attachment of the 5S RNA into the large ribosomal subunit, where it forms part of the central protuberance. In the 70S ribosome it contacts protein S13 of the 30S subunit (bridge B1b), connecting the 2 subunits; this bridge is implicated in subunit movement. Contacts the P site tRNA; the 5S rRNA and some of its associated proteins might help stabilize positioning of ribosome-bound tRNAs. This is Large ribosomal subunit protein uL5 from Mycoplasma capricolum subsp. capricolum (strain California kid / ATCC 27343 / NCTC 10154).